We begin with the raw amino-acid sequence, 27 residues long: Larval-specific very high density lipoprotein (27 aa).

As to quaternary structure, homodimer. Hemolymph.

Its subcellular location is the secreted. It localises to the extracellular space. Functionally, unknown (it might play a role in lipid transport and/or storage protein metabolism during metamorphosis). The chain is Larval-specific very high density lipoprotein from Apis mellifera (Honeybee).